The chain runs to 347 residues: Holliday junction branch migration complex subunit RuvB (347 aa).

Positions 1 to 183 are large ATPase domain (RuvB-L); the sequence is MTDVPRMVTP…FGIPVRLNFY (183 aa). ATP contacts are provided by residues Leu22, Arg23, Gly64, Lys67, Thr68, Thr69, 130–132, Arg173, Tyr183, and Arg220; that span reads EDF. Thr68 contacts Mg(2+). The small ATPAse domain (RuvB-S) stretch occupies residues 184–254; it reads TVDELEKIVS…IADHALGALE (71 aa). The tract at residues 257-347 is head domain (RuvB-H); the sequence is AAGLDAMDRR…QFGLFGGEDE (91 aa). Positions 293, 312, and 317 each coordinate DNA.

Belongs to the RuvB family. In terms of assembly, homohexamer. Forms an RuvA(8)-RuvB(12)-Holliday junction (HJ) complex. HJ DNA is sandwiched between 2 RuvA tetramers; dsDNA enters through RuvA and exits via RuvB. An RuvB hexamer assembles on each DNA strand where it exits the tetramer. Each RuvB hexamer is contacted by two RuvA subunits (via domain III) on 2 adjacent RuvB subunits; this complex drives branch migration. In the full resolvosome a probable DNA-RuvA(4)-RuvB(12)-RuvC(2) complex forms which resolves the HJ.

The protein localises to the cytoplasm. The catalysed reaction is ATP + H2O = ADP + phosphate + H(+). Its function is as follows. The RuvA-RuvB-RuvC complex processes Holliday junction (HJ) DNA during genetic recombination and DNA repair, while the RuvA-RuvB complex plays an important role in the rescue of blocked DNA replication forks via replication fork reversal (RFR). RuvA specifically binds to HJ cruciform DNA, conferring on it an open structure. The RuvB hexamer acts as an ATP-dependent pump, pulling dsDNA into and through the RuvAB complex. RuvB forms 2 homohexamers on either side of HJ DNA bound by 1 or 2 RuvA tetramers; 4 subunits per hexamer contact DNA at a time. Coordinated motions by a converter formed by DNA-disengaged RuvB subunits stimulates ATP hydrolysis and nucleotide exchange. Immobilization of the converter enables RuvB to convert the ATP-contained energy into a lever motion, pulling 2 nucleotides of DNA out of the RuvA tetramer per ATP hydrolyzed, thus driving DNA branch migration. The RuvB motors rotate together with the DNA substrate, which together with the progressing nucleotide cycle form the mechanistic basis for DNA recombination by continuous HJ branch migration. Branch migration allows RuvC to scan DNA until it finds its consensus sequence, where it cleaves and resolves cruciform DNA. In Nitrobacter hamburgensis (strain DSM 10229 / NCIMB 13809 / X14), this protein is Holliday junction branch migration complex subunit RuvB.